The sequence spans 235 residues: Golgi to ER traffic protein 1 (235 aa).

Position 1 (M1) is a topological domain, lumenal. The chain crosses the membrane as a helical span at residues 2–21 (HWAAAVAIFFIVVTKFLQYT). Residues 22–104 (NKYHEKWISK…AFQAHLHKLR (83 aa)) lie on the Cytoplasmic side of the membrane. Residues 68-104 (WTKNNRKLDSLDKEINNLKDEIQSENKAFQAHLHKLR) adopt a coiled-coil conformation. The chain crosses the membrane as a helical span at residues 105–125 (LLALTVPFFVFKIMYGKTPVY). The Lumenal portion of the chain corresponds to 126–181 (KLSSSTSTLFPTFVSGVWSQGWLYVLLHPLRTISQKWHIMEGKFGASKFDDMALQS). A helical transmembrane segment spans residues 182–198 (VSLGIWVWALMNVINGV). Residues 199-235 (EFIVKQLFLTPKMEAPASVETQEEKALDAVDDAIILD) lie on the Cytoplasmic side of the membrane.

Belongs to the WRB/GET1 family. Component of the Golgi to ER traffic (GET) complex, which is composed of GET1, GET2 and GET3. Within the complex, GET1 and GET2 form a heterotetramer which is stabilized by phosphatidylinositol binding and which binds to the GET3 homodimer.

The protein localises to the endoplasmic reticulum membrane. It is found in the golgi apparatus membrane. Its function is as follows. Required for the post-translational delivery of tail-anchored (TA) proteins to the endoplasmic reticulum. Together with GET2, acts as a membrane receptor for soluble GET3, which recognizes and selectively binds the transmembrane domain of TA proteins in the cytosol. The GET complex cooperates with the HDEL receptor ERD2 to mediate the ATP-dependent retrieval of resident ER proteins that contain a C-terminal H-D-E-L retention signal from the Golgi to the ER. This is Golgi to ER traffic protein 1 from Saccharomyces cerevisiae (strain RM11-1a) (Baker's yeast).